A 529-amino-acid polypeptide reads, in one-letter code: Bifunctional purine biosynthesis protein PurH (529 aa).

Positions Met1–Val148 constitute an MGS-like domain.

Belongs to the PurH family.

It carries out the reaction (6R)-10-formyltetrahydrofolate + 5-amino-1-(5-phospho-beta-D-ribosyl)imidazole-4-carboxamide = 5-formamido-1-(5-phospho-D-ribosyl)imidazole-4-carboxamide + (6S)-5,6,7,8-tetrahydrofolate. The enzyme catalyses IMP + H2O = 5-formamido-1-(5-phospho-D-ribosyl)imidazole-4-carboxamide. It participates in purine metabolism; IMP biosynthesis via de novo pathway; 5-formamido-1-(5-phospho-D-ribosyl)imidazole-4-carboxamide from 5-amino-1-(5-phospho-D-ribosyl)imidazole-4-carboxamide (10-formyl THF route): step 1/1. Its pathway is purine metabolism; IMP biosynthesis via de novo pathway; IMP from 5-formamido-1-(5-phospho-D-ribosyl)imidazole-4-carboxamide: step 1/1. The polypeptide is Bifunctional purine biosynthesis protein PurH (Pectobacterium carotovorum subsp. carotovorum (strain PC1)).